Reading from the N-terminus, the 572-residue chain is Proline--tRNA ligase (572 aa).

The protein belongs to the class-II aminoacyl-tRNA synthetase family. ProS type 1 subfamily. In terms of assembly, homodimer.

It localises to the cytoplasm. It catalyses the reaction tRNA(Pro) + L-proline + ATP = L-prolyl-tRNA(Pro) + AMP + diphosphate. In terms of biological role, catalyzes the attachment of proline to tRNA(Pro) in a two-step reaction: proline is first activated by ATP to form Pro-AMP and then transferred to the acceptor end of tRNA(Pro). As ProRS can inadvertently accommodate and process non-cognate amino acids such as alanine and cysteine, to avoid such errors it has two additional distinct editing activities against alanine. One activity is designated as 'pretransfer' editing and involves the tRNA(Pro)-independent hydrolysis of activated Ala-AMP. The other activity is designated 'posttransfer' editing and involves deacylation of mischarged Ala-tRNA(Pro). The misacylated Cys-tRNA(Pro) is not edited by ProRS. The chain is Proline--tRNA ligase from Photorhabdus laumondii subsp. laumondii (strain DSM 15139 / CIP 105565 / TT01) (Photorhabdus luminescens subsp. laumondii).